An 82-amino-acid chain; its full sequence is MTRILLLLLGFYQYFISPLLGNNCRFHPTCSEYAKEAISMHGSIKGLWFTFKRIIKCQPFCNGGYDTVPISIKNSKPLNKKI.

It belongs to the UPF0161 family.

The protein resides in the cell inner membrane. Its function is as follows. Could be involved in insertion of integral membrane proteins into the membrane. The sequence is that of Putative membrane protein insertion efficiency factor from Rickettsia africae (strain ESF-5).